Reading from the N-terminus, the 328-residue chain is Acetyl-coenzyme A carboxylase carboxyl transferase subunit alpha (328 aa).

Positions 42 to 296 (SFKEQLSILK…KESLISELHF (255 aa)) constitute a CoA carboxyltransferase C-terminal domain.

This sequence belongs to the AccA family. Acetyl-CoA carboxylase is a heterohexamer composed of biotin carboxyl carrier protein (accB), biotin carboxylase (accC) and two subunits each of ACCase subunit alpha (accA) and ACCase subunit beta (accD).

It is found in the plastid. Its subcellular location is the chloroplast. The catalysed reaction is N(6)-carboxybiotinyl-L-lysyl-[protein] + acetyl-CoA = N(6)-biotinyl-L-lysyl-[protein] + malonyl-CoA. It participates in lipid metabolism; malonyl-CoA biosynthesis; malonyl-CoA from acetyl-CoA: step 1/1. Its function is as follows. Component of the acetyl coenzyme A carboxylase (ACC) complex. First, biotin carboxylase catalyzes the carboxylation of biotin on its carrier protein (BCCP) and then the CO(2) group is transferred by the carboxyltransferase to acetyl-CoA to form malonyl-CoA. This chain is Acetyl-coenzyme A carboxylase carboxyl transferase subunit alpha, found in Gracilaria tenuistipitata var. liui (Red alga).